Consider the following 190-residue polypeptide: Holliday junction branch migration complex subunit RuvA (190 aa).

The interval 1–65 is domain I; the sequence is MIGNLSGIVD…ENVAQLYGFI (65 aa). Residues 66 to 143 are domain II; it reads SKEEQQCLRL…KLEINNNNFH (78 aa). The segment at 144–147 is flexible linker; the sequence is PINE. Residues 147–190 form a domain III region; the sequence is EDALSALINLGYEKMKAYDTIKKYRPNLDTKDIIRMALKELSIL.

It belongs to the RuvA family. As to quaternary structure, homotetramer. Forms an RuvA(8)-RuvB(12)-Holliday junction (HJ) complex. HJ DNA is sandwiched between 2 RuvA tetramers; dsDNA enters through RuvA and exits via RuvB. An RuvB hexamer assembles on each DNA strand where it exits the tetramer. Each RuvB hexamer is contacted by two RuvA subunits (via domain III) on 2 adjacent RuvB subunits; this complex drives branch migration. In the full resolvosome a probable DNA-RuvA(4)-RuvB(12)-RuvC(2) complex forms which resolves the HJ.

It localises to the cytoplasm. In terms of biological role, the RuvA-RuvB-RuvC complex processes Holliday junction (HJ) DNA during genetic recombination and DNA repair, while the RuvA-RuvB complex plays an important role in the rescue of blocked DNA replication forks via replication fork reversal (RFR). RuvA specifically binds to HJ cruciform DNA, conferring on it an open structure. The RuvB hexamer acts as an ATP-dependent pump, pulling dsDNA into and through the RuvAB complex. HJ branch migration allows RuvC to scan DNA until it finds its consensus sequence, where it cleaves and resolves the cruciform DNA. The polypeptide is Holliday junction branch migration complex subunit RuvA (Wolbachia pipientis wMel).